The sequence spans 482 residues: Pre-glycoprotein polyprotein GP complex (482 aa).

Residue G2 is the site of N-myristoyl glycine; by host attachment. Residues 2–17 (GQFISFMQEIPIFLQE) lie on the Extracellular side of the membrane. A helical membrane pass occupies residues 18–32 (ALNIALVAVSLICIV). Position 33 (K33) is a topological domain, cytoplasmic. Residues 34 to 53 (GLVNLYRCGLFQLMVFLVLA) traverse the membrane as a helical segment. Extracellular loops occupy residues 54–58 (GRSCS) and 59–421 (EETF…TLVD). Position 57 (C57) interacts with Zn(2+). N-linked (GlcNAc...) asparagine; by host glycosylation is found at N83 and N95. Disulfide bonds link C92/C224, C134/C162, C205/C211, C269/C282, and C353/C374. N-linked (GlcNAc...) asparagine; by host glycans are attached at residues N164 and N176. N354, N362, N379, and N384 each carry an N-linked (GlcNAc...) asparagine; by host glycan. The helical transmembrane segment at 422–442 (ICFWSTEFFISTLFLHLIGFP) threads the bilayer. The Cytoplasmic portion of the chain corresponds to 443 to 482 (THEHIRGEGCPLPHRLNSMGGCRCGKYLPLKKPTIWHRRH). Residues H444, H446, C452, H456, C464, C466, and H482 each coordinate Zn(2+).

It belongs to the arenaviridae GPC protein family. As to quaternary structure, homotetramer; disulfide-linked. In terms of assembly, homotetramer. GP2 homotetramers bind through ionic interactions with GP1 homotetramers to form the GP complex together with the stable signal peptide. The GP-C polyprotein interacts with the host protease MBTPS1/SKI-1 resulting in the polyprotein processing. Post-translationally, specific enzymatic cleavages in vivo yield mature proteins. GP-C polyprotein is cleaved in the endoplasmic reticulum by the host protease MBTPS1. Only cleaved glycoprotein is incorporated into virions. In terms of processing, the SSP remains stably associated with the GP complex following cleavage by signal peptidase and plays crucial roles in the trafficking of GP through the secretory pathway. Myristoylation is necessary for GP2-mediated fusion activity.

The protein localises to the virion membrane. The protein resides in the host endoplasmic reticulum membrane. Its subcellular location is the host Golgi apparatus membrane. It localises to the host cell membrane. Functionally, class I viral fusion protein that directs fusion of viral and host endosomal membranes, leading to delivery of the nucleocapsid into the cytoplasm. Membrane fusion is mediated by irreversible conformational changes induced upon acidification in the endosome. Its function is as follows. Stable signal peptide (SSP): cleaved and functions as a signal peptide. In addition, it is also retained as the third component of the GP complex. The SSP is required for efficient glycoprotein expression, post-translational maturation cleavage of GP1 and GP2, glycoprotein transport to the cell surface plasma membrane, formation of infectious virus particles, and acid pH-dependent glycoprotein-mediated cell fusion. In terms of biological role, interacts with the host receptor. In Artibeus (neotropical fruit bats), this protein is Pre-glycoprotein polyprotein GP complex.